A 300-amino-acid polypeptide reads, in one-letter code: Transcription initiation factor IIB (300 aa).

The TFIIB-type zinc-finger motif lies at 2–34 (NKQKVCPACESAELIYDPERGEIVCAKCGYVIE). Residues cysteine 7, cysteine 10, cysteine 26, and cysteine 29 each contribute to the Zn(2+) site. 2 tandem repeats follow at residues 114-197 (SELD…ARNL) and 210-291 (DYVN…ELVE).

The protein belongs to the TFIIB family.

Functionally, stabilizes TBP binding to an archaeal box-A promoter. Also responsible for recruiting RNA polymerase II to the pre-initiation complex (DNA-TBP-TFIIB). The protein is Transcription initiation factor IIB of Pyrococcus furiosus (strain ATCC 43587 / DSM 3638 / JCM 8422 / Vc1).